The following is a 231-amino-acid chain: GSK-3-binding protein FRAT2 (231 aa).

2 disordered regions span residues 1–24 and 53–109; these read MPCR…DDSF and DTAH…PGAV. The segment covering 7-23 has biased composition (acidic residues); that stretch reads EEEEAGDEAEGEEDDDS. Positions 172 to 194 are involved in GSK-3 binding; it reads DPHRLLQQLVLSGNLIKEAVRRL. A disordered region spans residues 203 to 231; it reads ATSPASAPGSGGGRSGPDSVTLQPSGAWL.

The protein belongs to the GSK-3-binding protein family. As to quaternary structure, binds GSK-3 and prevents GSK-3-dependent phosphorylation.

In terms of biological role, positively regulates the Wnt signaling pathway by stabilizing beta-catenin through the association with GSK-3. In Mus musculus (Mouse), this protein is GSK-3-binding protein FRAT2 (Frat2).